The primary structure comprises 473 residues: Sulfhydrylase-like protein lolC2 (473 aa).

Lys226 carries the post-translational modification N6-(pyridoxal phosphate)lysine.

Belongs to the trans-sulfuration enzymes family. Pyridoxal 5'-phosphate serves as cofactor.

It functions in the pathway alkaloid biosynthesis. In terms of biological role, sulfhydrylase-like protein; part of the gene cluster that mediates the biosynthesis of loline alkaloids, potent insecticidal agents composed of a pyrrolizidine ring system and an uncommon ether bridge linking carbons 2 and 7. Lolines are structurally differentiated by the various modifications of the L-amino group and include norloline, loline, N-methylloline, N-acetylloline, N-acetylnorloline, and N-formylloline. The first committed step is the condensation of O-acetyl-L-homoserine (derived from L-aspartic acid) and L-proline, probably catalyzed by the gamma-type pyridoxal 5'-phosphate(PLP)-dependent enzyme lolC, to give the diamino diacid, NACPP. Ensuing cyclization, decarboxylation, and acetylation steps yield 1-exo-acetamidopyrrolizidine (AcAP). LolO is required for installation of the ether bridge upon the pathway intermediate, 1-exo-acetamidopyrrolizidine (AcAP). In sequential 2-oxoglutarate- and O(2)-consuming steps, lolO removes hydrogens from C2 and C7 of AcAP to form both carbon-oxygen bonds in N-acetylnorloline (NANL), the precursor to all other lolines. The enzymes lolD, lolE, lolF and lolT have also been proposed to be involved in the ether-bridge installation. Further processing of the exocyclic moiety of NANL by fungal N-acetamidase (LolN), methyltransferase (LolM), and cytochrome P450 (LolP) enzymes, with occasional involvement of a plant acetyltransferase, generates the other known lolines. LolN transforms NANL to norlonine which is monomethylated and dimethylated to respectively lonine and N-methyllonine (NML) by lolM. LolP catalyzes hydroxylation of the methyl group in N-methylloline (NML) and further oxygenation to N-formylloline (NFL). A plant acetyltransferase is responsible for the acetylation of loline to form N-acetylloline (NAL). LolA might interact with aspartate kinase to prevent feedback inhibition of its activity by these end products and thereby promote production of L-homoserine from L-aspartate. The protein is Sulfhydrylase-like protein lolC2 of Epichloe uncinata (Endophyte fungus).